A 119-amino-acid chain; its full sequence is Large ribosomal subunit protein uL22c (119 aa).

Belongs to the universal ribosomal protein uL22 family. In terms of assembly, part of the 50S ribosomal subunit.

Its subcellular location is the plastid. The protein localises to the chloroplast. In terms of biological role, this protein binds specifically to 23S rRNA. Its function is as follows. The globular domain of the protein is located near the polypeptide exit tunnel on the outside of the subunit, while an extended beta-hairpin is found that lines the wall of the exit tunnel in the center of the 70S ribosome. The chain is Large ribosomal subunit protein uL22c (rpl22) from Chaetosphaeridium globosum (Charophycean green alga).